The following is an 846-amino-acid chain: SLIT and NTRK-like protein 2 (846 aa).

The N-terminal stretch at 1–21 is a signal peptide; that stretch reads MLSGVWFLSVLTVAGILQTES. The Extracellular segment spans residues 22–622; the sequence is RKTAKDICKI…LHTEVPLSVL (601 aa). Intrachain disulfides connect cysteine 29-cysteine 35 and cysteine 33-cysteine 46. LRR repeat units follow at residues 63–84, 87–108, 111–132, 135–156, 159–180, and 182–203; these read RIYQ…EFVN, NAVT…AFSG, TLKR…TFLG, SLEY…AFSK, KLKV…VFRF, and LLTH…GVLE. An N-linked (GlcNAc...) asparagine glycan is attached at asparagine 84. A required for interaction with PTPRD region spans residues 167–215; the sequence is DNLLLSLPSNVFRFVLLTHLDLRGNRLKVMPFAGVLEHIGGIMEIQLEE. The 50-residue stretch at 216 to 265 folds into the LRRCT 1 domain; sequence NPWNCTCDLLPLKAWLDTITVFVGEIVCETPFRLHGKDVTQLTRQDLCPR. N-linked (GlcNAc...) asparagine glycosylation occurs at asparagine 219. Cystine bridges form between cysteine 220–cysteine 243 and cysteine 222–cysteine 263. The tract at residues 261–322 is disordered; the sequence is DLCPRKSASG…TPRVTVSKDR (62 aa). Composition is skewed to low complexity over residues 267-276 and 285-300; these read SASGDSSQRS and RLTP…TRAP. An LRRNT domain is found at 332-374; sequence QTKSPVALTCPSSCVCTSQSSDNGLNVNCQERKFTNISDLQPK. LRR repeat units follow at residues 377-398, 401-422, 425-446, 449-470, 473-494, and 496-517; these read SPKK…DLLE, SLDL…AFTN, SLRR…MFDG, SLQY…TFDA, NLQL…IFGG, and ALTR…GVLD. N-linked (GlcNAc...) asparagine glycosylation occurs at asparagine 422. The 52-residue stretch at 530–581 folds into the LRRCT 2 domain; sequence NPWDCTCDIMGLKDWTEHANSPVIINEVTCESPAKHAGEILKFLGREAICPE. The chain crosses the membrane as a helical span at residues 623–643; that stretch reads ILGLLVVFILSVCFGAGLFVF. Over 644–846 the chain is Cytoplasmic; that stretch reads VLKRRKGVPN…LEKQTAISQL (203 aa). Residue tyrosine 757 is modified to Phosphotyrosine.

It belongs to the SLITRK family. Interacts with PTPRD; this interaction is PTPRD splicing-dependent and may induce pre-synaptic differentiation. Interacts with NTRK2. In the adult, significant expression is detected only in the brain. Broadly expressed in embryonic brain with highest expression in ventricular layer, subventricular zone, cortical plate, pyramidal layer of hippocampus, subicular neuroepithelium, thalamus, hypothalamus and spinal cord.

Its subcellular location is the membrane. The protein localises to the cell membrane. It localises to the cell projection. It is found in the dendrite. It is involved in synaptogenesis. Promotes excitatory synapse differentiation. Suppresses neurite outgrowth. Involved in the negative regulation of NTRK2. The sequence is that of SLIT and NTRK-like protein 2 (Slitrk2) from Mus musculus (Mouse).